We begin with the raw amino-acid sequence, 196 residues long: Phosphatidyl-N-methylethanolamine N-methyltransferase (196 aa).

Position 1 (Met-1) is a topological domain, lumenal. An intramembrane region (helical) is located at residues Ala-2–Ala-28. The Lumenal portion of the chain corresponds to Arg-29–Leu-40. The helical transmembrane segment at Ala-41–Val-62 threads the bilayer. The Cytoplasmic segment spans residues Arg-63–Ala-89. A helical membrane pass occupies residues Lys-90–Val-110. Residue Cys-94 to Gly-96 coordinates S-adenosyl-L-methionine. Over Gly-111–Tyr-153 the chain is Lumenal. A helical transmembrane segment spans residues Gly-154–Lys-174. Residues Phe-175–Glu-196 lie on the Cytoplasmic side of the membrane. Residue Glu-176–Glu-177 participates in S-adenosyl-L-methionine binding.

The protein belongs to the class VI-like SAM-binding methyltransferase superfamily. PEMT/PEM2 methyltransferase family.

The protein localises to the endoplasmic reticulum membrane. Its subcellular location is the mitochondrion membrane. The enzyme catalyses a 1,2-diacyl-sn-glycero-3-phospho-N-methylethanolamine + S-adenosyl-L-methionine = a 1,2-diacyl-sn-glycero-3-phospho-N,N-dimethylethanolamine + S-adenosyl-L-homocysteine + H(+). It catalyses the reaction a 1,2-diacyl-sn-glycero-3-phospho-N,N-dimethylethanolamine + S-adenosyl-L-methionine = a 1,2-diacyl-sn-glycero-3-phosphocholine + S-adenosyl-L-homocysteine + H(+). The protein operates within phospholipid metabolism; phosphatidylcholine biosynthesis. Functionally, catalyzes the second two steps of the methylation pathway of phosphatidylcholine biosynthesis, the SAM-dependent methylation of phosphatidylmonomethylethanolamine (PMME) to phosphatidyldimethylethanolamine (PDME) and of PDME to phosphatidylcholine (PC). The polypeptide is Phosphatidyl-N-methylethanolamine N-methyltransferase (Schizosaccharomyces pombe (strain 972 / ATCC 24843) (Fission yeast)).